We begin with the raw amino-acid sequence, 118 residues long: Small ribosomal subunit protein uS13 (118 aa).

Residues 92-118 (RRSLPVRGQRTKTNARTRKGPRKPIKK) form a disordered region.

This sequence belongs to the universal ribosomal protein uS13 family. Part of the 30S ribosomal subunit. Forms a loose heterodimer with protein S19. Forms two bridges to the 50S subunit in the 70S ribosome.

Located at the top of the head of the 30S subunit, it contacts several helices of the 16S rRNA. In the 70S ribosome it contacts the 23S rRNA (bridge B1a) and protein L5 of the 50S subunit (bridge B1b), connecting the 2 subunits; these bridges are implicated in subunit movement. Contacts the tRNAs in the A and P-sites. The protein is Small ribosomal subunit protein uS13 of Acinetobacter baumannii (strain AB307-0294).